Consider the following 625-residue polypeptide: Threonine--tRNA ligase (625 aa).

Residues 1–149 (MRVLLIHAKR…RNYEAKTTAR (149 aa)) are editing domain. 2 catalytic regions span residues 197–494 (NPVN…PYIP) and 198–494 (PVNK…PYIP). Zn(2+)-binding residues include Cys291, His342, and His463.

It belongs to the class-II aminoacyl-tRNA synthetase family. As to quaternary structure, homodimer. Zn(2+) serves as cofactor.

It is found in the cytoplasm. The catalysed reaction is tRNA(Thr) + L-threonine + ATP = L-threonyl-tRNA(Thr) + AMP + diphosphate + H(+). Catalyzes the attachment of threonine to tRNA(Thr) in a two-step reaction: L-threonine is first activated by ATP to form Thr-AMP and then transferred to the acceptor end of tRNA(Thr). Also edits incorrectly charged L-seryl-tRNA(Thr). This is Threonine--tRNA ligase from Hyperthermus butylicus (strain DSM 5456 / JCM 9403 / PLM1-5).